Here is a 340-residue protein sequence, read N- to C-terminus: Phosphate acyltransferase (340 aa).

This sequence belongs to the PlsX family. As to quaternary structure, homodimer. Probably interacts with PlsY.

The protein localises to the cytoplasm. The enzyme catalyses a fatty acyl-[ACP] + phosphate = an acyl phosphate + holo-[ACP]. The protein operates within lipid metabolism; phospholipid metabolism. In terms of biological role, catalyzes the reversible formation of acyl-phosphate (acyl-PO(4)) from acyl-[acyl-carrier-protein] (acyl-ACP). This enzyme utilizes acyl-ACP as fatty acyl donor, but not acyl-CoA. The chain is Phosphate acyltransferase from Marinobacter nauticus (strain ATCC 700491 / DSM 11845 / VT8) (Marinobacter aquaeolei).